The sequence spans 671 residues: Sodium, potassium, lithium and rubidium/H(+) antiporter (671 aa).

The next 11 helical transmembrane spans lie at 7 to 29 (VLVL…FIPV), 46 to 66 (GLHI…PLLF), 83 to 103 (PILL…GYTI), 110 to 130 (IPLP…VVAV), 156 to 176 (ASGL…AFSI), 182 to 202 (SFVL…FFII), 228 to 248 (FVIY…VVAG), 276 to 296 (IILF…IPDV), 315 to 335 (ILII…LFWA), 364 to 384 (GAVT…GSPF), and 389 to 409 (LIIF…SVLL).

The protein belongs to the monovalent cation:proton antiporter 1 (CPA1) transporter (TC 2.A.36) family. Nhak (TC 2.A.36.3.2) subfamily.

It is found in the cell membrane. Its function is as follows. Transporter involved in the efflux of sodium, potassium, lithium and rubidium. This chain is Sodium, potassium, lithium and rubidium/H(+) antiporter (nhaK), found in Bacillus pumilus (strain SAFR-032).